Reading from the N-terminus, the 481-residue chain is Proline--tRNA ligase (481 aa).

Belongs to the class-II aminoacyl-tRNA synthetase family. ProS type 3 subfamily. In terms of assembly, homodimer.

The protein resides in the cytoplasm. The catalysed reaction is tRNA(Pro) + L-proline + ATP = L-prolyl-tRNA(Pro) + AMP + diphosphate. Functionally, catalyzes the attachment of proline to tRNA(Pro) in a two-step reaction: proline is first activated by ATP to form Pro-AMP and then transferred to the acceptor end of tRNA(Pro). In Chlorobium phaeobacteroides (strain DSM 266 / SMG 266 / 2430), this protein is Proline--tRNA ligase.